The following is a 151-amino-acid chain: Urease accessory protein UreE (151 aa).

This sequence belongs to the UreE family.

It localises to the cytoplasm. Its function is as follows. Involved in urease metallocenter assembly. Binds nickel. Probably functions as a nickel donor during metallocenter assembly. This is Urease accessory protein UreE from Lachnoclostridium phytofermentans (strain ATCC 700394 / DSM 18823 / ISDg) (Clostridium phytofermentans).